Consider the following 3080-residue polypeptide: Protein PIEZO homolog (3080 aa).

The next 6 membrane-spanning stretches (helical) occupy residues 28-48, 57-77, 86-106, 113-133, 204-224, and 232-252; these read YIYF…SLIL, PIIT…VNVV, LSVN…WIVF, VIVF…LVYP, YPSI…LLLA, and VMLK…LFVY. Asn-276 carries N-linked (GlcNAc...) asparagine glycosylation. A helical transmembrane segment spans residues 285–305; sequence WPLVIGYITVLLLYISTCILF. 2 N-linked (GlcNAc...) asparagine glycosylation sites follow: Asn-312 and Asn-339. The next 2 membrane-spanning stretches (helical) occupy residues 362 to 382 and 396 to 416; these read ILVV…LASG and VIYI…IFNI. Asn-434 carries an N-linked (GlcNAc...) asparagine glycan. A helical membrane pass occupies residues 438–458; the sequence is WLYIGVQIVVSLTLSLYCFYS. Positions 469–548 are disordered; sequence KKDQQSQQSQ…GGGIIRPRKP (80 aa). Low complexity predominate over residues 473 to 505; that stretch reads QSQQSQPQPQQQQQQQQSSQNNQIQQSPLQYQQ. The segment covering 512-532 has biased composition (polar residues); that stretch reads ISNKSLPSSPMSTKSTTVHIQ. Residues Asn-514, Asn-567, and Asn-606 are each glycosylated (N-linked (GlcNAc...) asparagine). 3 consecutive transmembrane segments (helical) span residues 672–692, 700–720, and 740–760; these read GLTS…VFVI, FWMC…IWQL, and YGSP…FSII. A glycan (N-linked (GlcNAc...) asparagine) is linked at Asn-795. Transmembrane regions (helical) follow at residues 827 to 847, 849 to 869, and 872 to 892; these read FCYL…INIV, MATV…SIHI, and FWII…IMQF. The N-linked (GlcNAc...) asparagine glycan is linked to Asn-918. The chain crosses the membrane as a helical span at residues 928-948; the sequence is LFGCSSILVVCVFQLTVFFSI. Asn-992 carries an N-linked (GlcNAc...) asparagine glycan. Transmembrane regions (helical) follow at residues 1036–1056 and 1067–1087; these read FAIS…MIVI and IGSF…AALL. The N-linked (GlcNAc...) asparagine glycan is linked to Asn-1109. The segment at 1158 to 1185 is disordered; it reads QQQRKLEEHEEEYEEEEDQFGNKKNNDK. A compositionally biased stretch (acidic residues) spans 1166–1176; it reads HEEEYEEEEDQ. 3 N-linked (GlcNAc...) asparagine glycosylation sites follow: Asn-1191, Asn-1240, and Asn-1251. A disordered region spans residues 1199 to 1253; sequence DDGNNNNNNNNNNNNNNNNNNNNNNNNNNNNNNNNNNNNNNNQSNNENNENNNNS. Residues 1202–1252 are compositionally biased toward low complexity; that stretch reads NNNNNNNNNNNNNNNNNNNNNNNNNNNNNNNNNNNNNNNQSNNENNENNNN. 3 consecutive transmembrane segments (helical) span residues 1281 to 1301, 1316 to 1336, and 1360 to 1380; these read VLAF…LIII, IYVS…ILVV, and LLLL…VLFF. N-linked (GlcNAc...) asparagine glycans are attached at residues Asn-1424 and Asn-1440. The next 2 membrane-spanning stretches (helical) occupy residues 1472 to 1492 and 1519 to 1539; these read VILI…SCFY and IYNW…ILYF. Residues Asn-1559 and Asn-1589 are each glycosylated (N-linked (GlcNAc...) asparagine). The helical transmembrane segment at 1619–1639 threads the bilayer; the sequence is IETGPLSISTISDVIIMVLLA. Basic residues predominate over residues 1704 to 1714; sequence RINRRKNRHNH. Residues 1704-1812 are disordered; sequence RINRRKNRHN…NPLSNSSSTV (109 aa). Positions 1715–1742 are enriched in low complexity; sequence YYNNNPNNNYNNNNNNNNSNSSNSNNNN. Asn-1731, Asn-1734, Asn-1763, Asn-1768, Asn-1771, Asn-1779, Asn-1807, and Asn-1864 each carry an N-linked (GlcNAc...) asparagine glycan. Positions 1762–1782 are enriched in polar residues; sequence KNTTNQNATNSTYSPFANSTM. The segment covering 1789–1812 has biased composition (low complexity); sequence NNNNNNNNNNNFNNNPLSNSSSTV. Disordered regions lie at residues 1873-1899 and 1958-2032; these read LQQE…SSKE and SQLL…TSSS. Low complexity predominate over residues 1958-2021; it reads SQLLQQQQQQ…NNNNNNNNNN (64 aa). Asn-2027 is a glycosylation site (N-linked (GlcNAc...) asparagine). A run of 2 helical transmembrane segments spans residues 2078–2098 and 2112–2132; these read IANG…AVFL and FWRF…VFQI. Asn-2148 is a glycosylation site (N-linked (GlcNAc...) asparagine). The helical transmembrane segment at 2199–2219 threads the bilayer; sequence VFGLYIIDGHFISGAFWDLAI. The disordered stretch occupies residues 2277–2367; it reads LNNSPISLNS…NNNNNNNNNN (91 aa). Asn-2285 is a glycosylation site (N-linked (GlcNAc...) asparagine). Low complexity predominate over residues 2288 to 2367; it reads NNNNNNNNNN…NNNNNNNNNN (80 aa). 2 helical membrane-spanning segments follow: residues 2427–2447 and 2457–2477; these read IIIY…WLAI and YYMP…IFPQ. An N-linked (GlcNAc...) asparagine glycan is attached at Asn-2478. A run of 4 helical transmembrane segments spans residues 2500–2520, 2530–2550, 2553–2573, and 2671–2691; these read YIVI…IYLY, QIVL…DLIV, FSFG…IYLY, and FVTG…PLII. 9 N-linked (GlcNAc...) asparagine glycosylation sites follow: Asn-2762, Asn-2790, Asn-2837, Asn-2840, Asn-2848, Asn-2858, Asn-2908, Asn-2913, and Asn-2935. A disordered region spans residues 2835–2863; sequence QSNNSNNSNNPNENSSSGSDDNNNNSNNN. Low complexity predominate over residues 2836 to 2863; that stretch reads SNNSNNSNNPNENSSSGSDDNNNNSNNN. Residues 2955–2975 form a helical membrane-spanning segment; that stretch reads ITSTLVSAGIIGLYVSVVLSV. Positions 3054–3080 are disordered; it reads PTINSTLNNQNNQNNNNNNNNNHEKIN. Residue Asn-3057 is glycosylated (N-linked (GlcNAc...) asparagine). The segment covering 3061–3074 has biased composition (low complexity); the sequence is NNQNNQNNNNNNNN.

The protein belongs to the PIEZO (TC 1.A.75) family.

The protein resides in the membrane. In Dictyostelium discoideum (Social amoeba), this protein is Protein PIEZO homolog.